The chain runs to 390 residues: Pyruvate dehydrogenase E1 component subunit alpha, somatic form, mitochondrial (390 aa).

A mitochondrion-targeting transit peptide spans 1 to 29; it reads MRKMLAAVSRVLSGVAQKPASRVLVASRH. N6-acetyllysine; alternate is present on lysine 63. Lysine 63 is modified (N6-succinyllysine; alternate). Pyruvate-binding residues include histidine 92, tyrosine 118, arginine 119, alanine 157, glycine 165, valine 167, aspartate 196, glycine 197, alanine 198, asparagine 225, and tyrosine 227. Thiamine diphosphate contacts are provided by tyrosine 118 and arginine 119. Glycine 165, valine 167, aspartate 196, glycine 197, alanine 198, and asparagine 225 together coordinate thiamine diphosphate. Aspartate 196 is a binding site for Mg(2+). Mg(2+) is bound by residues asparagine 225 and tyrosine 227. Serine 232 is subject to Phosphoserine; by PDK1. Position 244 is an N6-acetyllysine; alternate (lysine 244). Lysine 244 carries the post-translational modification N6-succinyllysine; alternate. Lysine 267 is modified (N6-acetyllysine). At lysine 277 the chain carries N6-succinyllysine. A thiamine diphosphate-binding site is contributed by histidine 292. Serine 293 carries the phosphoserine; by PDK1, PDK2, PDK3 and PDK4 modification. Serine 295 is subject to Phosphoserine. Serine 300 bears the Phosphoserine; by PDK1, PDK2, PDK3 and PDK4 mark. Tyrosine 301 is modified (phosphotyrosine). Lysine 313 carries the post-translational modification N6-acetyllysine; alternate. Lysine 313 carries the N6-succinyllysine; alternate modification. Residues lysine 321 and lysine 336 each carry the N6-acetyllysine modification. An N6-succinyllysine modification is found at lysine 385.

As to quaternary structure, heterotetramer of two PDHA1 and two PDHB subunits. The heterotetramer interacts with DLAT, and is part of the multimeric pyruvate dehydrogenase complex that contains multiple copies of pyruvate dehydrogenase (E1), dihydrolipoamide acetyltransferase (DLAT, E2) and lipoamide dehydrogenase (DLD, E3). These subunits are bound to an inner core composed of about 48 DLAT and 12 PDHX molecules. Thiamine diphosphate serves as cofactor. It depends on Mg(2+) as a cofactor. Post-translationally, phosphorylation at Ser-232, Ser-293 and Ser-300 by PDK family kinases inactivates the enzyme; for this phosphorylation at a single site is sufficient. Phosphorylation at Ser-293 interferes with access to active site, and thereby inactivates the enzyme. Dephosphorylation at all three sites, i.e. at Ser-232, Ser-293 and Ser-300, is required for reactivation. In terms of processing, acetylation alters the phosphorylation pattern. Deacetylated by SIRT3.

The protein localises to the mitochondrion matrix. It catalyses the reaction N(6)-[(R)-lipoyl]-L-lysyl-[protein] + pyruvate + H(+) = N(6)-[(R)-S(8)-acetyldihydrolipoyl]-L-lysyl-[protein] + CO2. With respect to regulation, pyruvate dehydrogenase activity is inhibited by phosphorylation of PDHA1; it is reactivated by dephosphorylation. Its function is as follows. The pyruvate dehydrogenase complex catalyzes the overall conversion of pyruvate to acetyl-CoA and CO(2), and thereby links the glycolytic pathway to the tricarboxylic cycle. The protein is Pyruvate dehydrogenase E1 component subunit alpha, somatic form, mitochondrial (PDHA1) of Bos taurus (Bovine).